The following is a 277-amino-acid chain: 3-methyl-2-oxobutanoate hydroxymethyltransferase (277 aa).

Mg(2+)-binding residues include Asp-53 and Asp-96. 3-methyl-2-oxobutanoate is bound by residues 53–54, Asp-96, and Lys-126; that span reads DS. A Mg(2+)-binding site is contributed by Glu-128. The active-site Proton acceptor is Glu-195.

The protein belongs to the PanB family. In terms of assembly, homodecamer; pentamer of dimers. Mg(2+) serves as cofactor.

The protein localises to the cytoplasm. The catalysed reaction is 3-methyl-2-oxobutanoate + (6R)-5,10-methylene-5,6,7,8-tetrahydrofolate + H2O = 2-dehydropantoate + (6S)-5,6,7,8-tetrahydrofolate. It participates in cofactor biosynthesis; (R)-pantothenate biosynthesis; (R)-pantoate from 3-methyl-2-oxobutanoate: step 1/2. Catalyzes the reversible reaction in which hydroxymethyl group from 5,10-methylenetetrahydrofolate is transferred onto alpha-ketoisovalerate to form ketopantoate. This Pelodictyon phaeoclathratiforme (strain DSM 5477 / BU-1) protein is 3-methyl-2-oxobutanoate hydroxymethyltransferase.